Reading from the N-terminus, the 356-residue chain is Malate dehydrogenase, glyoxysomal (356 aa).

Residues 1-36 constitute a glyoxysome transit peptide; it reads MQPIPDVNQRIARISAHLHPPKYQMEESSVLRRANC. NAD(+) contacts are provided by residues 51–57 and Asp77; that span reads GAAGGIG. Positions 124 and 130 each coordinate substrate. NAD(+) is bound by residues Asn137 and 160-162; that span reads ISN. Substrate-binding residues include Asn162 and Arg196. The active-site Proton acceptor is His220. An NAD(+)-binding site is contributed by Met271.

It belongs to the LDH/MDH superfamily. MDH type 1 family. As to quaternary structure, homodimer.

The protein resides in the glyoxysome. The enzyme catalyses (S)-malate + NAD(+) = oxaloacetate + NADH + H(+). This Cucumis sativus (Cucumber) protein is Malate dehydrogenase, glyoxysomal (MDHG).